Here is a 250-residue protein sequence, read N- to C-terminus: Homeobox protein Dlx4a (250 aa).

The segment at residues 123–182 is a DNA-binding region (homeobox); it reads IRKPRTIYSSLQLQALNQRFQQTQYLALPERADLAAKLGLTQTQVKIWFQNKRSKYKKIM. The interval 182 to 202 is disordered; the sequence is MKHGSSGPEGEHLQAASASGA.

The protein belongs to the distal-less homeobox family.

The protein resides in the nucleus. This chain is Homeobox protein Dlx4a (dlx4a), found in Danio rerio (Zebrafish).